Here is a 447-residue protein sequence, read N- to C-terminus: MMNMKEDKKNTMDMTNMKHHDERKKLNSSQGKNEIIFPEVAESKKDNNGYKNYTLKAQKGKTEFYKNNFSNTLGYNGNLLGPTLKLKKGDKVKIKLINNLDENTTFHWHGLEVNGKVDGGPSQVIKPGKEKTIKFEVNQDSATLWYHPHPSPNTAKQVYNGLSGLLYIEDSKKNNYPSNYGKNDLPIIIQDKTFVSKKLNYSKTKDEDGTQGDTVLVNGIVNPKLTAKEEKIRLRLLNGSNARDLNLKLSNNQSFEYIASDGGQLKNAKKLKEINLAPSERKEIVIDLSKMKGEKVSLVDNDKTVILPISNKEKSSNKSNTPKVSKKIKLEGMNDNVTINGNKFDPNRIDFTQKLNQKEVWEIENVKDKMGGMKHPFHIHGTQFKVLSVDGEKPPKDMRGKKDVISLEPGQKAKIEVVFKNTGTYMFHCHILEHEDNGMMGQIKVTN.

The segment covering 1-25 (MMNMKEDKKNTMDMTNMKHHDERKK) has biased composition (basic and acidic residues). The disordered stretch occupies residues 1–29 (MMNMKEDKKNTMDMTNMKHHDERKKLNSS). Cu cation contacts are provided by H107, H109, H147, H149, H375, H378, H380, H428, C429, H430, H434, and M439.

This sequence belongs to the multicopper oxidase family. Cu cation is required as a cofactor.

It localises to the cytoplasm. Functionally, may be involved in copper homeostasis and oxidative stress response. In Staphylococcus haemolyticus (strain JCSC1435), this protein is Multicopper oxidase mco (mco).